The following is a 1401-amino-acid chain: DNA-directed RNA polymerase subunit beta' (1401 aa).

The Zn(2+) site is built by cysteine 71, cysteine 73, cysteine 86, and cysteine 89. Mg(2+) contacts are provided by aspartate 462, aspartate 464, and aspartate 466. Residues cysteine 810, cysteine 884, cysteine 891, and cysteine 894 each coordinate Zn(2+). The segment at 1378 to 1401 (EKQATIVPSAPEPEPLALPTPEQS) is disordered.

Belongs to the RNA polymerase beta' chain family. As to quaternary structure, the RNAP catalytic core consists of 2 alpha, 1 beta, 1 beta' and 1 omega subunit. When a sigma factor is associated with the core the holoenzyme is formed, which can initiate transcription. Mg(2+) serves as cofactor. It depends on Zn(2+) as a cofactor.

It catalyses the reaction RNA(n) + a ribonucleoside 5'-triphosphate = RNA(n+1) + diphosphate. In terms of biological role, DNA-dependent RNA polymerase catalyzes the transcription of DNA into RNA using the four ribonucleoside triphosphates as substrates. The sequence is that of DNA-directed RNA polymerase subunit beta' from Rhodopseudomonas palustris (strain BisB18).